Here is a 118-residue protein sequence, read N- to C-terminus: Mitochondrial import inner membrane translocase subunit Tim10 B (118 aa).

Positions 31–55 match the Twin CX3C motif motif; it reads CFQRCVPSLHHRALDAEEEACLHSC. 2 disulfides stabilise this stretch: C31-C55 and C35-C51. The segment at 89-118 is disordered; that stretch reads SAVPHATAEQLETSPSRSLPSGNLGKGGAG. Residues 98–109 are compositionally biased toward polar residues; sequence QLETSPSRSLPS.

This sequence belongs to the small Tim family. As to quaternary structure, component of the TIM22 complex, which core is composed of TIMM22, associated with TIMM10 (TIMM10A and/or TIMM10B), TIMM9, AGK and TIMM29.

It is found in the mitochondrion inner membrane. In terms of biological role, component of the TIM22 complex, a complex that mediates the import and insertion of multi-pass transmembrane proteins into the mitochondrial inner membrane. The TIM22 complex forms a twin-pore translocase that uses the membrane potential as the external driving force. In the TIM22 complex, it may act as a docking point for the soluble 70 kDa complex that guides the target proteins in transit through the aqueous mitochondrial intermembrane space. The polypeptide is Mitochondrial import inner membrane translocase subunit Tim10 B (TIMM10B) (Bos taurus (Bovine)).